Here is a 69-residue protein sequence, read N- to C-terminus: Conotoxin Fr3.1 (69 aa).

Residues 1 to 20 (MLKTGVLLLIFLVLFPLATL) form the signal peptide. Residues 21–51 (QDADQPVERNVENKQDLNLDKRRGMKLLAQR) constitute a propeptide that is removed on maturation. Glutamine 52 is modified (pyrrolidone carboxylic acid). Glutamate 54 bears the 4-carboxyglutamate mark. A 4-hydroxyproline modification is found at proline 58.

Belongs to the conotoxin M superfamily. As to expression, expressed by the venom duct.

It is found in the secreted. Functionally, probable toxin. This chain is Conotoxin Fr3.1, found in Conus frigidus (Frigid cone).